Here is a 231-residue protein sequence, read N- to C-terminus: Small ribosomal subunit protein uS5 (231 aa).

The region spanning 61 to 124 (KFRSKKPYRM…NRAKLNIIKV (64 aa)) is the S5 DRBM domain.

This sequence belongs to the universal ribosomal protein uS5 family. In terms of assembly, part of the 30S ribosomal subunit. Contacts protein S4.

With S4 and S12 plays an important role in translational accuracy. This Nanoarchaeum equitans (strain Kin4-M) protein is Small ribosomal subunit protein uS5.